The following is a 125-amino-acid chain: Small ribosomal subunit protein bS6 (125 aa).

The interval 101–125 (PMMKEEKAKNLLAPQSDAAEPTAAA) is disordered.

It belongs to the bacterial ribosomal protein bS6 family.

Binds together with bS18 to 16S ribosomal RNA. This is Small ribosomal subunit protein bS6 from Laribacter hongkongensis (strain HLHK9).